The sequence spans 400 residues: Nicotinate phosphoribosyltransferase (400 aa).

His220 bears the Phosphohistidine; by autocatalysis mark.

This sequence belongs to the NAPRTase family. In terms of processing, transiently phosphorylated on a His residue during the reaction cycle. Phosphorylation strongly increases the affinity for substrates and increases the rate of nicotinate D-ribonucleotide production. Dephosphorylation regenerates the low-affinity form of the enzyme, leading to product release.

The catalysed reaction is nicotinate + 5-phospho-alpha-D-ribose 1-diphosphate + ATP + H2O = nicotinate beta-D-ribonucleotide + ADP + phosphate + diphosphate. It functions in the pathway cofactor biosynthesis; NAD(+) biosynthesis; nicotinate D-ribonucleotide from nicotinate: step 1/1. Its function is as follows. Catalyzes the synthesis of beta-nicotinate D-ribonucleotide from nicotinate and 5-phospho-D-ribose 1-phosphate at the expense of ATP. The polypeptide is Nicotinate phosphoribosyltransferase (Salmonella newport (strain SL254)).